Consider the following 399-residue polypeptide: Telomeric repeat-binding factor 2-interacting protein 1 (399 aa).

Residues methionine 1–phenylalanine 21 form a disordered region. Alanine 2 carries the N-acetylalanine modification. In terms of domain architecture, BRCT spans aspartate 10–leucine 101. Residues serine 36 and serine 43 each carry the phosphoserine modification. Lysine 114 participates in a covalent cross-link: Glycyl lysine isopeptide (Lys-Gly) (interchain with G-Cter in SUMO2). Positions glutamine 130–leucine 190 constitute a Myb-like domain. 2 positions are modified to phosphoserine: serine 156 and serine 158. A Glycyl lysine isopeptide (Lys-Gly) (interchain with G-Cter in SUMO2) cross-link involves residue lysine 196. Disordered regions lie at residues leucine 199 to isoleucine 245 and threonine 279 to proline 309. A phosphoserine mark is found at serine 205 and serine 208. Glycyl lysine isopeptide (Lys-Gly) (interchain with G-Cter in SUMO2) cross-links involve residues lysine 210, lysine 214, and lysine 242. Residues cysteine 281–glutamate 304 show a composition bias toward acidic residues. Residue lysine 372 forms a Glycyl lysine isopeptide (Lys-Gly) (interchain with G-Cter in SUMO2) linkage. Residues lysine 383–lysine 399 carry the Nuclear localization signal motif.

It belongs to the RAP1 family. In terms of assembly, associates with the I-kappa-B-kinase (IKK) core complex, composed of CHUK, IKBKB and IKBKG. Homodimer. Component of the shelterin complex (telosome) composed of TERF1, TERF2, TINF2, TERF2IP ACD and POT1. Interacts with TERF2 (but not TERF1) with its C-terminus. Interacts with SLX4/BTBD12. Interacts with TERF2; the interaction is direct.

It is found in the nucleus. Its subcellular location is the cytoplasm. The protein localises to the chromosome. It localises to the telomere. Acts both as a regulator of telomere function and as a transcription regulator. Involved in the regulation of telomere length and protection as a component of the shelterin complex (telosome). In contrast to other components of the shelterin complex, it is dispensible for telomere capping and does not participate in the protection of telomeres against non-homologous end-joining (NHEJ)-mediated repair. Instead, it is required to negatively regulate telomere recombination and is essential for repressing homology-directed repair (HDR), which can affect telomere length. Does not bind DNA directly: recruited to telomeric double-stranded 5'-TTAGGG-3' repeats via its interaction with TERF2. Independently of its function in telomeres, also acts as a transcription regulator: recruited to extratelomeric 5'-TTAGGG-3' sites via its association with TERF2 or other factors, and regulates gene expression. When cytoplasmic, associates with the I-kappa-B-kinase (IKK) complex and acts as a regulator of the NF-kappa-B signaling by promoting IKK-mediated phosphorylation of RELA/p65, leading to activate expression of NF-kappa-B target genes. The chain is Telomeric repeat-binding factor 2-interacting protein 1 (TERF2IP) from Bos taurus (Bovine).